The sequence spans 475 residues: tRNA modification GTPase MnmE (475 aa).

Residues arginine 24, glutamate 81, and lysine 124 each contribute to the (6S)-5-formyl-5,6,7,8-tetrahydrofolate site. One can recognise a TrmE-type G domain in the interval 220–397 (GLSVVLAGQP…LRRELLRLVG (178 aa)). Asparagine 230 lines the K(+) pocket. GTP is bound by residues 230 to 235 (NVGKSS), 249 to 255 (TPIAGTT), 274 to 277 (DTAG), and 378 to 380 (SAR). Serine 234 contacts Mg(2+). 3 residues coordinate K(+): threonine 249, isoleucine 251, and threonine 254. Threonine 255 contributes to the Mg(2+) binding site. Lysine 475 lines the (6S)-5-formyl-5,6,7,8-tetrahydrofolate pocket.

Belongs to the TRAFAC class TrmE-Era-EngA-EngB-Septin-like GTPase superfamily. TrmE GTPase family. In terms of assembly, homodimer. Heterotetramer of two MnmE and two MnmG subunits. K(+) serves as cofactor.

Its subcellular location is the cytoplasm. In terms of biological role, exhibits a very high intrinsic GTPase hydrolysis rate. Involved in the addition of a carboxymethylaminomethyl (cmnm) group at the wobble position (U34) of certain tRNAs, forming tRNA-cmnm(5)s(2)U34. This chain is tRNA modification GTPase MnmE, found in Cupriavidus necator (strain ATCC 17699 / DSM 428 / KCTC 22496 / NCIMB 10442 / H16 / Stanier 337) (Ralstonia eutropha).